Here is a 369-residue protein sequence, read N- to C-terminus: DNA replication and repair protein RecF (369 aa).

30–37 (GINAQGKT) provides a ligand contact to ATP.

This sequence belongs to the RecF family.

It is found in the cytoplasm. Its function is as follows. The RecF protein is involved in DNA metabolism; it is required for DNA replication and normal SOS inducibility. RecF binds preferentially to single-stranded, linear DNA. It also seems to bind ATP. This Macrococcus caseolyticus (strain JCSC5402) (Macrococcoides caseolyticum) protein is DNA replication and repair protein RecF.